The following is a 156-amino-acid chain: Ribosome maturation factor RimP (156 aa).

It belongs to the RimP family.

The protein resides in the cytoplasm. Functionally, required for maturation of 30S ribosomal subunits. The sequence is that of Ribosome maturation factor RimP from Bacillus mycoides (strain KBAB4) (Bacillus weihenstephanensis).